A 677-amino-acid polypeptide reads, in one-letter code: Envelope glycoprotein (677 aa).

The first 33 residues, 1 to 33, serve as a signal peptide directing secretion; it reads MGSGYQLLQLPRERFRKTSFLVWVIILFQRAIS. Residues 34 to 651 are Extracellular-facing; the sequence is MPLGIVTNST…DLNLWTGWRQ (618 aa). A glycan (N-linked (GlcNAc...) asparagine; by host) is linked at Asn-41. 5 disulfides stabilise this stretch: Cys-54–Cys-610, Cys-109–Cys-136, Cys-122–Cys-148, Cys-512–Cys-557, and Cys-602–Cys-609. Residues 55–202 form a receptor-binding region; sequence RDKLSSTSQL…HFWKATPAHE (148 aa). N-linked (GlcNAc...) asparagine; by host glycans are attached at residues Asn-205, Asn-239, Asn-258, Asn-269, Asn-297, Asn-317, Asn-318, Asn-339, Asn-406, Asn-420, Asn-435, and Asn-463. The segment at 306–486 is mucin-like region; it reads NLHFQILSTH…PSQPGLTINT (181 aa). Residues 315–326 are compositionally biased toward polar residues; it reads HTNNSSDQSPAG. Disordered regions lie at residues 315–349, 370–483, and 489–508; these read HTNNSSDQSPAGTVQGKISYHPPTNNSELVPTDSP, NGET…PGLT, and KVADSLSPTRKQKRSVRQNT. 3 stretches are compositionally biased toward polar residues: residues 370–421, 428–445, and 458–472; these read NGET…ASNE, MNSIQGSNNSAQSPQTKA, and PQETANISKPGTSPG. The segment at 525–540 is fusion peptide; that stretch reads GAAAGLAWIPYFGPAA. Residues 555–596 adopt a coiled-coil conformation; sequence LICGLRQLANETTQALQLFLRATTELRTYSLLNRKAIDFLLQ. N-linked (GlcNAc...) asparagine; by host glycosylation is present at Asn-564. Positions 616–635 form a coiled coil; it reads WTKNITDEINQIKHDFIDNP. Residue Asn-619 is glycosylated (N-linked (GlcNAc...) asparagine; by host). Residues 652–672 form a helical membrane-spanning segment; sequence WIPAGIGIIGVIIAIIALLCI. Residues Cys-671 and Cys-673 are each lipidated (S-palmitoyl cysteine; by host). Topologically, residues 673 to 677 are cytoplasmic; it reads CKILC.

This sequence belongs to the filoviruses glycoprotein family. In terms of assembly, homotrimer; each monomer consists of a GP1 and a GP2 subunit linked by disulfide bonds. The resulting peplomers (GP1,2) protrude from the virus surface as spikes. Interacts with host integrin alpha-V/ITGAV. Interacts with host CLEC10A. Binds also to host CD209 and CLEC4M/DC-SIGN(R). Interacts with host FOLR1. Interacts with BST2; this interaction inhibits the antiviral effect of BST2 and this allows viral release from infected cells. Interacts with host FCN1; this interaction enhances viral entry. Interacts with host TLR4; this interaction induces cell death in T-lymphocytes or proinflammatory cytokines and SOCS1 production in monocytes. Interacts with host entry receptor NPC1. As to quaternary structure, GP1 and GP2delta are part of GP1,2delta soluble complexes released by ectodomain shedding. The signal peptide region modulates GP's high mannose glycosylation, thereby determining the efficiency of the interactions with DC-SIGN(R). In terms of processing, N-glycosylated. Post-translationally, O-glycosylated in the mucin-like region. Palmitoylation of GP2 is not required for its function. In terms of processing, specific enzymatic cleavages in vivo yield mature proteins. The precursor is processed into GP1 and GP2 by host cell furin in the trans Golgi, and maybe by other host proteases, to yield the mature GP1 and GP2 proteins. The cleavage site corresponds to the furin optimal cleavage sequence [KR]-X-[KR]-R. This cleavage does not seem to be required for function. After the internalization of the virus into cell endosomes, GP1 C-terminus is removed by the endosomal proteases cathepsin B, cathepsin L, or both, leaving a 19-kDa N-terminal fragment which is further digested by cathepsin B. Proteolytic processing of GP1,2 by host ADAM17 can remove the transmembrane anchor of GP2 and leads to shedding of complexes consisting in GP1 and truncated GP2 (GP1,2delta).

It localises to the virion membrane. The protein resides in the host cell membrane. Its subcellular location is the secreted. Trimeric GP1,2 complexes form the virion surface spikes and mediate the viral entry processes, with GP1 acting as the receptor-binding subunit and GP2 as the membrane fusion subunit. At later times of infection, down-regulates the expression of various host cell surface molecules that are essential for immune surveillance and cell adhesion. Down-modulates several integrins including ITGA1, ITGA2, ITGA3, ITGA4, ITGA5, ITGA6, ITGAV and ITGB1. This decrease in cell adhesion molecules may lead to cell detachment, contributing to the disruption of blood vessel integrity and hemorrhages developed during infection (cytotoxicity). Interacts with host TLR4 and thereby stimulates the differentiation and activation of monocytes leading to bystander death of T-lymphocytes. Down-regulates as well the function of host natural killer cells. Counteracts the antiviral effect of host BST2/tetherin that restricts release of progeny virions from infected cells. However, cooperates with VP40 and host BST2 to activate canonical NF-kappa-B pathway in a manner dependent on neddylation. Functionally, functions as a decoy for anti-GP1,2 antibodies thereby contributing to viral immune evasion. Interacts and activates host macrophages and dendritic cells inducing up-regulation of cytokine transcription. This effect is mediated throught activation of host TLR4. Its function is as follows. Responsible for binding to the receptor(s) on target cells. Interacts with CD209/DC-SIGN and CLEC4M/DC-SIGNR which act as cofactors for virus entry into dendritic cells (DCs) and endothelial cells. Binding to the macrophage specific lectin CLEC10A also seems to enhance virus infectivity. Interaction with FOLR1/folate receptor alpha may be a cofactor for virus entry in some cell types, although results are contradictory. Members of the Tyro3 receptor tyrosine kinase family also seem to be cell entry factors in filovirus infection. Once attached, the virions are internalized through clathrin-dependent endocytosis and/or macropinocytosis. After internalization of the virus into the endosomes of the host cell, proteolysis of GP1 by two cysteine proteases, CTSB/cathepsin B and CTSL/cathepsin L removes the glycan cap and allows GP1 binding to the host entry receptor NPC1. NPC1-binding, Ca(2+) and acidic pH induce a conformational change of GP2, which unmasks its fusion peptide and permit membranes fusion. In terms of biological role, acts as a class I viral fusion protein. Under the current model, the protein has at least 3 conformational states: pre-fusion native state, pre-hairpin intermediate state, and post-fusion hairpin state. During viral and target cell membrane fusion, the coiled coil regions (heptad repeats) assume a trimer-of-hairpins structure, positioning the fusion peptide in close proximity to the C-terminal region of the ectodomain. The formation of this structure appears to drive apposition and subsequent fusion of viral and target cell membranes. Responsible for penetration of the virus into the cell cytoplasm by mediating the fusion of the membrane of the endocytosed virus particle with the endosomal membrane. Low pH in endosomes induces an irreversible conformational change in GP2, releasing the fusion hydrophobic peptide. This Reston ebolavirus (strain Philippines-96) (REBOV) protein is Envelope glycoprotein (GP).